The following is a 545-amino-acid chain: Glucose-6-phosphate isomerase (545 aa).

The active-site Proton donor is the glutamate 351. Catalysis depends on residues histidine 382 and lysine 510.

This sequence belongs to the GPI family.

The protein localises to the cytoplasm. It carries out the reaction alpha-D-glucose 6-phosphate = beta-D-fructose 6-phosphate. It functions in the pathway carbohydrate biosynthesis; gluconeogenesis. Its pathway is carbohydrate degradation; glycolysis; D-glyceraldehyde 3-phosphate and glycerone phosphate from D-glucose: step 2/4. Catalyzes the reversible isomerization of glucose-6-phosphate to fructose-6-phosphate. The sequence is that of Glucose-6-phosphate isomerase from Shewanella frigidimarina (strain NCIMB 400).